The primary structure comprises 362 residues: H-2 class I histocompatibility antigen, L-D alpha chain (362 aa).

Residues 1-24 (MGAMAPRTLLLLLAAALAPTQTRA) form the signal peptide. The alpha-1 stretch occupies residues 25–114 (GPHSMRYFET…LLGYYNQSAG (90 aa)). The Extracellular portion of the chain corresponds to 25–309 (GPHSMRYFET…PPPSTDSYMV (285 aa)). Residue N110 is glycosylated (N-linked (GlcNAc...) asparagine). An alpha-2 region spans residues 115–206 (GTHTLQWMYG…KNGNATLLRT (92 aa)). Cysteines 125 and 188 form a disulfide. Residues N200 and N280 are each glycosylated (N-linked (GlcNAc...) asparagine). Residues 207-298 (DSPKAHVTHH…GLPEPLTLRW (92 aa)) are alpha-3. Positions 209–297 (PKAHVTHHPR…EGLPEPLTLR (89 aa)) constitute an Ig-like C1-type domain. The cysteines at positions 227 and 283 are disulfide-linked. The tract at residues 299–309 (EPPPSTDSYMV) is connecting peptide. The chain crosses the membrane as a helical span at residues 310–331 (IVAVLGVLGAMAIIGAVVAFVM). The Cytoplasmic portion of the chain corresponds to 332–362 (KRRRNTGGKGGDYALAPGSQSSEMSLRDCKA). The tract at residues 340-362 (KGGDYALAPGSQSSEMSLRDCKA) is disordered. Residues S353 and S356 each carry the phosphoserine modification.

The protein belongs to the MHC class I family. As to quaternary structure, heterodimer of an alpha chain and a beta chain (beta-2-microglobulin).

It localises to the membrane. Its function is as follows. Involved in the presentation of foreign antigens to the immune system. The sequence is that of H-2 class I histocompatibility antigen, L-D alpha chain (H2-L) from Mus musculus (Mouse).